Reading from the N-terminus, the 235-residue chain is Eukaryotic translation initiation factor 4E-1 (235 aa).

The span at 16-25 shows a compositional bias: basic and acidic residues; sequence VNKHRGVRSD. Residues 16–56 form a disordered region; sequence VNKHRGVRSDGEEDEQLEEGEIVGGDADTLSSSSSSRPGTA. Over residues 26–36 the composition is skewed to acidic residues; the sequence is GEEDEQLEEGE. 2 EIF4G-binding regions span residues 60–63 and 70–106; these read HPLE and FDTP…NNIH. MRNA-binding positions include 78–83, lysine 110, and 128–129; these read KQVAWG and WE. A disulfide bridge links cysteine 133 with cysteine 171. Residues 154–163 form an EIF4G-binding region; sequence YTLLAMIGEQ. MRNA is bound by residues 178 to 183 and 223 to 227; these read RARQEK and KTLDR.

Belongs to the eukaryotic initiation factor 4E family. EIF4F is a multi-subunit complex, the composition of which varies with external and internal environmental conditions. It is composed of at least EIF4A, EIF4E and EIF4G. EIF4E is also known to interact with other partners. In higher plants two isoforms of EIF4F have been identified, named isoform EIF4F and isoform EIF(iso)4F. Isoform EIF4F has subunits p220 and p26, whereas isoform EIF(iso)4F has subunits p82 and p28. As to quaternary structure, (Microbial infection) Interacts with potyvirus viral genome-linked protein (VPg); this interaction is possible in susceptible hosts but impaired in resistant plants. Post-translationally, according to the redox status, the Cys-133-Cys-171 disulfide bridge may have a role in regulating protein function by affecting its ability to bind capped mRNA.

The protein localises to the nucleus. It localises to the cytoplasm. Its function is as follows. Component of the protein complex eIF4F, which is involved in the recognition of the mRNA cap, ATP-dependent unwinding of 5'-terminal secondary structure and recruitment of mRNA to the ribosome. Recognizes and binds the 7-methylguanosine-containing mRNA cap during an early step in the initiation of protein synthesis and facilitates ribosome binding by inducing the unwinding of the mRNAs secondary structures. Key component of recessive resistance to potyviruses. (Microbial infection) Susceptibility host factor required for viral infection by recruiting viral RNAs to the host ribosomal complex via an interaction with viral genome-linked protein (VPg). The polypeptide is Eukaryotic translation initiation factor 4E-1 (Lactuca sativa (Garden lettuce)).